The following is a 315-amino-acid chain: Glycine--tRNA ligase alpha subunit (315 aa).

It belongs to the class-II aminoacyl-tRNA synthetase family. As to quaternary structure, tetramer of two alpha and two beta subunits.

It is found in the cytoplasm. It catalyses the reaction tRNA(Gly) + glycine + ATP = glycyl-tRNA(Gly) + AMP + diphosphate. The chain is Glycine--tRNA ligase alpha subunit from Sorangium cellulosum (strain So ce56) (Polyangium cellulosum (strain So ce56)).